Reading from the N-terminus, the 85-residue chain is UPF0297 protein CHY_0540 (85 aa).

It belongs to the UPF0297 family.

This Carboxydothermus hydrogenoformans (strain ATCC BAA-161 / DSM 6008 / Z-2901) protein is UPF0297 protein CHY_0540.